Reading from the N-terminus, the 153-residue chain is Aspartate carbamoyltransferase regulatory chain (153 aa).

C109, C114, C138, and C141 together coordinate Zn(2+).

The protein belongs to the PyrI family. As to quaternary structure, contains catalytic and regulatory chains. Zn(2+) serves as cofactor.

Involved in allosteric regulation of aspartate carbamoyltransferase. In Shigella dysenteriae serotype 1 (strain Sd197), this protein is Aspartate carbamoyltransferase regulatory chain.